A 162-amino-acid chain; its full sequence is Crossover junction endodeoxyribonuclease RuvC (162 aa).

Residues D8, E69, and H141 contribute to the active site. The Mg(2+) site is built by D8, E69, and H141.

It belongs to the RuvC family. In terms of assembly, homodimer which binds Holliday junction (HJ) DNA. The HJ becomes 2-fold symmetrical on binding to RuvC with unstacked arms; it has a different conformation from HJ DNA in complex with RuvA. In the full resolvosome a probable DNA-RuvA(4)-RuvB(12)-RuvC(2) complex forms which resolves the HJ. Mg(2+) is required as a cofactor.

The protein localises to the cytoplasm. The enzyme catalyses Endonucleolytic cleavage at a junction such as a reciprocal single-stranded crossover between two homologous DNA duplexes (Holliday junction).. Its function is as follows. The RuvA-RuvB-RuvC complex processes Holliday junction (HJ) DNA during genetic recombination and DNA repair. Endonuclease that resolves HJ intermediates. Cleaves cruciform DNA by making single-stranded nicks across the HJ at symmetrical positions within the homologous arms, yielding a 5'-phosphate and a 3'-hydroxyl group; requires a central core of homology in the junction. The consensus cleavage sequence is 5'-(A/T)TT(C/G)-3'. Cleavage occurs on the 3'-side of the TT dinucleotide at the point of strand exchange. HJ branch migration catalyzed by RuvA-RuvB allows RuvC to scan DNA until it finds its consensus sequence, where it cleaves and resolves the cruciform DNA. This chain is Crossover junction endodeoxyribonuclease RuvC, found in Wolbachia sp. subsp. Brugia malayi (strain TRS).